A 1056-amino-acid chain; its full sequence is MKADSSSSSSMSSRMRLRNSHGVGSSSQDWSPFSRHRYSALSSQEDYRSEESEEFGPVFIQEPDDAIFSLDSDDKKIIMNCEARGNPVPTYSWLINGTNVDTEADFRYSLIDGNLIIHNASEVIDYGRYQCRAENSIGIVLSRDALLQFAYLGPFSGKTRGAVSVREGQGVVLMCAPPSHSPEIIYSWVFNELPSFVAEDSRRFISQETGNLYIPKVQPSDVGSYVCQVKNTVTNARVLSPPTPLTLKTDGVMGEYEPKIEAHFPQTVLAAKGVTVRLECFALGNPVPTITWRKMSGNIPKKARLRKSQAVLEIPNIQLEDSGSYECKAENTRGGTAFRGHLQVYTLPQWISMINDTQLDSGEQLRWECRATGKPRPTYRWLRNGEPLSTQSRVEMVNGELTIHRLQQADSGMYQCIAENKYGAIYSSAELKILASAPMFNNNPVRLIATVGKDVSLECRPRASPKPRISWRKNDRRLQPSRRIMLLRNNTLRIINSSRSDEGSYVCRAENQFGSAELTTVLLVKEPMRVELSPLRVEVTVGESVVLSCKVTHDPSLDVSFLWLLNNQPLNTQQDGGHFEYIQTQSSTADLMIRSILLKHAGKYGCRAQTSTDSVLAEAELLVRGPPGPPGVVIVEEITASTATLSWSHGVDNHSPITTYNVQARSPVSLGWQTVKTDPDPVTGSMESAMAVDLNPWVEYEFRVVATNSIGTGDPSPPSRAVRTKEAVPSVAPANVRGGNGRRHELVISWEPVSEEYQNGEGFGYIVAFRVNGTRGWKEKMVTSADSTTYKYRDETFPPLTPFEVRVGVYNNKGDGPFSEVVTVFSAEGEPREPPSEVQAFAVSSSEIKVLWKPPSPGLGRPQGYEVSFWKDVEQEELGKKKRTLGNETNMLLSGLDGNTQYLVSVKGFNSAGQGPSSTAVKISTKKNAPSLPPGNLMWIQEGNNVSLSWDPVKARDNESEVIGYKVLLRQEGRGHSQVMRTPNSAVVLTLPEGGTYIIEVRAVSEGGEGAASAQVRVLTSSGVRAKNGQLSVQNSPPGLAWTALFLSLMVPSFPL.

Positions 1-14 are enriched in low complexity; the sequence is MKADSSSSSSMSSR. The interval 1–33 is disordered; that stretch reads MKADSSSSSSMSSRMRLRNSHGVGSSSQDWSPF. Positions 22 to 31 are enriched in polar residues; the sequence is GVGSSSQDWS. Ig-like C2-type domains follow at residues 57-142, 154-240, 258-343, 348-432, 438-519, and 527-622; these read PVFI…IVLS, PFSG…RVLS, PKIE…GHLQ, PQWI…AELK, PMFN…AELT, and PMRV…AELL. 3 disulfides stabilise this stretch: C81-C131, C175-C227, and C280-C327. 2 N-linked (GlcNAc...) asparagine glycosylation sites follow: N96 and N119. N355 is a glycosylation site (N-linked (GlcNAc...) asparagine). Intrachain disulfides connect C369–C416, C459–C507, and C549–C606. N-linked (GlcNAc...) asparagine glycosylation is found at N489 and N496. 4 consecutive Fibronectin type-III domains span residues 629–727, 732–829, 834–928, and 933–1023; these read PPGV…TKEA, APAN…SAEG, PPSE…TKKN, and PPGN…TSSG. Residues 711–736 are disordered; sequence GTGDPSPPSRAVRTKEAVPSVAPANV. Residues N772, N887, N945, and N958 are each glycosylated (N-linked (GlcNAc...) asparagine). N1035 carries the GPI-anchor amidated asparagine lipid modification. Positions 1036–1056 are cleaved as a propeptide — removed in mature form; that stretch reads SPPGLAWTALFLSLMVPSFPL.

It belongs to the immunoglobulin superfamily. Contactin family.

Its subcellular location is the cell membrane. In terms of biological role, contactins mediate cell surface interactions during nervous system development. This Danio rerio (Zebrafish) protein is Contactin-5 (cntn5).